The primary structure comprises 500 residues: Protein nucleotidyltransferase YdiU (500 aa).

ATP is bound by residues G98, G100, R101, K124, D136, G137, R187, and R194. The active-site Proton acceptor is the D263. The Mg(2+) site is built by N264 and D273. D273 provides a ligand contact to ATP.

It belongs to the SELO family. Requires Mg(2+) as cofactor. Mn(2+) is required as a cofactor.

It catalyses the reaction L-seryl-[protein] + ATP = 3-O-(5'-adenylyl)-L-seryl-[protein] + diphosphate. The catalysed reaction is L-threonyl-[protein] + ATP = 3-O-(5'-adenylyl)-L-threonyl-[protein] + diphosphate. The enzyme catalyses L-tyrosyl-[protein] + ATP = O-(5'-adenylyl)-L-tyrosyl-[protein] + diphosphate. It carries out the reaction L-histidyl-[protein] + UTP = N(tele)-(5'-uridylyl)-L-histidyl-[protein] + diphosphate. It catalyses the reaction L-seryl-[protein] + UTP = O-(5'-uridylyl)-L-seryl-[protein] + diphosphate. The catalysed reaction is L-tyrosyl-[protein] + UTP = O-(5'-uridylyl)-L-tyrosyl-[protein] + diphosphate. In terms of biological role, nucleotidyltransferase involved in the post-translational modification of proteins. It can catalyze the addition of adenosine monophosphate (AMP) or uridine monophosphate (UMP) to a protein, resulting in modifications known as AMPylation and UMPylation. This is Protein nucleotidyltransferase YdiU from Herminiimonas arsenicoxydans.